Reading from the N-terminus, the 324-residue chain is MAAIEDSPTFSSVVTPAAFEIGSLPTTEIPVDPVENDSTAPPKPVRITCPTVAGTYPVVLFFHGFYLRNYFYSDVLNHIASHGYILVAPQLCKLLPPGGQVEVDDAGSVINWASENLKAHLPTSVNANGKYTSLVGHSRGGKTAFAVALGHAATLDPSITFSALIGIDPVAGTNKYIRTDPHILTYKPESFELDIPVAVVGTGLGPKWNNVMPPCAPTDLNHEEFYKECKATKAHFVAADYGHMDMLDDDLPGFVGFMAGCMCKNGQRKKSEMRSFVGGIVVAFLKYSLWGEKAEIRLIVKDPSVSPAKLDPSPELEEASGIFV.

Positions 136 to 140 (GHSRG) match the GXSXG motif. Ser138 functions as the Nucleophile in the catalytic mechanism. Active-site charge relay system residues include Asp168 and His243.

The protein belongs to the AB hydrolase superfamily. Lipase family. In terms of tissue distribution, expressed in seedlings, leaves, flowers and siliques, but not in roots.

It is found in the cytoplasm. It localises to the cytosol. It carries out the reaction a chlorophyll + H2O = a chlorophyllide + phytol + H(+). It catalyses the reaction chlorophyll a + H2O = phytol + chlorophyllide a + H(+). It participates in porphyrin-containing compound metabolism; chlorophyll degradation. Functionally, catalyzes the hydrolysis of ester bond in chlorophyll to yield chlorophyllide and phytol. Shows a preferential activity toward chlorophyll a. Does not seem to be required for chlorophyll degradation during senescence. May modulate the balance between different plant defense pathways. The polypeptide is Chlorophyllase-1 (Arabidopsis thaliana (Mouse-ear cress)).